We begin with the raw amino-acid sequence, 293 residues long: Elongation factor Ts (293 aa).

Positions 80–83 (TDFV) are involved in Mg(2+) ion dislocation from EF-Tu.

The protein belongs to the EF-Ts family.

It localises to the cytoplasm. Its function is as follows. Associates with the EF-Tu.GDP complex and induces the exchange of GDP to GTP. It remains bound to the aminoacyl-tRNA.EF-Tu.GTP complex up to the GTP hydrolysis stage on the ribosome. The protein is Elongation factor Ts of Aeromonas salmonicida (strain A449).